We begin with the raw amino-acid sequence, 608 residues long: Elongation factor 4 (608 aa).

A tr-type G domain is found at 11–193; it reads SKIRNFSIIA…QIVEKVPAPD (183 aa). Residues 23 to 28 and 140 to 143 contribute to the GTP site; these read DHGKST and NKID.

It belongs to the TRAFAC class translation factor GTPase superfamily. Classic translation factor GTPase family. LepA subfamily.

The protein localises to the cell membrane. The enzyme catalyses GTP + H2O = GDP + phosphate + H(+). Functionally, required for accurate and efficient protein synthesis under certain stress conditions. May act as a fidelity factor of the translation reaction, by catalyzing a one-codon backward translocation of tRNAs on improperly translocated ribosomes. Back-translocation proceeds from a post-translocation (POST) complex to a pre-translocation (PRE) complex, thus giving elongation factor G a second chance to translocate the tRNAs correctly. Binds to ribosomes in a GTP-dependent manner. This Bacillus cytotoxicus (strain DSM 22905 / CIP 110041 / 391-98 / NVH 391-98) protein is Elongation factor 4.